We begin with the raw amino-acid sequence, 509 residues long: ATP synthase subunit alpha (509 aa).

169–176 lines the ATP pocket; it reads GDRQTGKT.

This sequence belongs to the ATPase alpha/beta chains family. In terms of assembly, F-type ATPases have 2 components, CF(1) - the catalytic core - and CF(0) - the membrane proton channel. CF(1) has five subunits: alpha(3), beta(3), gamma(1), delta(1), epsilon(1). CF(0) has three main subunits: a(1), b(2) and c(9-12). The alpha and beta chains form an alternating ring which encloses part of the gamma chain. CF(1) is attached to CF(0) by a central stalk formed by the gamma and epsilon chains, while a peripheral stalk is formed by the delta and b chains.

The protein localises to the cell inner membrane. The enzyme catalyses ATP + H2O + 4 H(+)(in) = ADP + phosphate + 5 H(+)(out). In terms of biological role, produces ATP from ADP in the presence of a proton gradient across the membrane. The alpha chain is a regulatory subunit. In Parvibaculum lavamentivorans (strain DS-1 / DSM 13023 / NCIMB 13966), this protein is ATP synthase subunit alpha.